We begin with the raw amino-acid sequence, 271 residues long: GATA transcription factor 19 (271 aa).

Residues 1–23 (MAAEPPADGRDPPADDGAAGDGA) are disordered. In terms of domain architecture, Tify spans 33–68 (LSAASEQLTLVYQGEVYVFDPVPPQKVQAVLLVLGG). The region spanning 95–137 (RIASLMRFREKRKERCFDKKIRYSVRKEVAQKMKRRKGQFAGR) is the CCT domain. The GATA-type zinc-finger motif lies at 166-193 (CQNCGISSRLTPAMRRGPAGPRSLCNAC). Residues 238–271 (NQTTMKTDTEMVPEQEQKADVLPPTKEEDSMATS) form a disordered region. Residues 252 to 271 (QEQKADVLPPTKEEDSMATS) are compositionally biased toward basic and acidic residues.

The protein belongs to the type IV zinc-finger family. Class C subfamily.

The protein localises to the nucleus. In terms of biological role, transcriptional activator that specifically binds 5'-GATA-3' or 5'-GAT-3' motifs within gene promoters. The protein is GATA transcription factor 19 of Oryza sativa subsp. indica (Rice).